The following is a 61-amino-acid chain: Sec-independent protein translocase protein TatA (61 aa).

Residues 2–22 traverse the membrane as a helical segment; it reads GLSGISPLSLLLILAIIVALF.

Belongs to the TatA/E family. In terms of assembly, the Tat system comprises two distinct complexes: a TatABC complex, containing multiple copies of TatA, TatB and TatC subunits, and a separate TatA complex, containing only TatA subunits. Substrates initially bind to the TatABC complex, which probably triggers association of the separate TatA complex to form the active translocon.

Its subcellular location is the cell inner membrane. Part of the twin-arginine translocation (Tat) system that transports large folded proteins containing a characteristic twin-arginine motif in their signal peptide across membranes. TatA could form the protein-conducting channel of the Tat system. The chain is Sec-independent protein translocase protein TatA from Legionella pneumophila (strain Corby).